A 758-amino-acid chain; its full sequence is 3-isopropylmalate dehydratase (758 aa).

Positions 359, 420, and 423 each coordinate [4Fe-4S] cluster. Residues Ser486 and Ser488 each carry the phosphoserine modification.

Belongs to the aconitase/IPM isomerase family. The cofactor is [4Fe-4S] cluster.

It carries out the reaction (2R,3S)-3-isopropylmalate = (2S)-2-isopropylmalate. It participates in amino-acid biosynthesis; L-leucine biosynthesis; L-leucine from 3-methyl-2-oxobutanoate: step 2/4. Catalyzes the isomerization between 2-isopropylmalate and 3-isopropylmalate, via the formation of 2-isopropylmaleate. The sequence is that of 3-isopropylmalate dehydratase (leu2) from Schizosaccharomyces pombe (strain 972 / ATCC 24843) (Fission yeast).